A 555-amino-acid chain; its full sequence is Formate--tetrahydrofolate ligase (555 aa).

Threonine 64 to threonine 71 is an ATP binding site.

It belongs to the formate--tetrahydrofolate ligase family.

It catalyses the reaction (6S)-5,6,7,8-tetrahydrofolate + formate + ATP = (6R)-10-formyltetrahydrofolate + ADP + phosphate. It functions in the pathway one-carbon metabolism; tetrahydrofolate interconversion. In Phocaeicola vulgatus (strain ATCC 8482 / DSM 1447 / JCM 5826 / CCUG 4940 / NBRC 14291 / NCTC 11154) (Bacteroides vulgatus), this protein is Formate--tetrahydrofolate ligase.